A 622-amino-acid chain; its full sequence is Low affinity potassium transport system protein Kup (622 aa).

12 helical membrane-spanning segments follow: residues 12 to 32 (ITLA…LYTL), 49 to 69 (VFGF…IKYL), 103 to 123 (VIMG…TPAI), 137 to 157 (PQLD…LFMI), 165 to 185 (VGKL…VLGL), 213 to 233 (VSFI…ALYA), 247 to 267 (WFTV…ALLL), 276 to 296 (PFFL…AALA), 337 to 357 (IYIP…IVSF), 363 to 383 (LAAA…ILST), 396 to 416 (FVAL…SANL), and 419 to 439 (LLSG…IMTT).

This sequence belongs to the HAK/KUP transporter (TC 2.A.72) family.

It localises to the cell inner membrane. It catalyses the reaction K(+)(in) + H(+)(in) = K(+)(out) + H(+)(out). In terms of biological role, responsible for the low-affinity transport of potassium into the cell. Likely operates as a K(+):H(+) symporter. The protein is Low affinity potassium transport system protein Kup of Salmonella gallinarum (strain 287/91 / NCTC 13346).